A 109-amino-acid polypeptide reads, in one-letter code: U4-lycotoxin-Ls1a (109 aa).

An N-terminal signal peptide occupies residues 1 to 22 (MKVLVLFSVLFLTLFSYSSTEA). A propeptide spanning residues 23–44 (IDELDSDAEEDMLSLMANEQVR) is cleaved from the precursor. The segment at 45 to 88 (AKACTPRLHDCSHDRHSCCRGELFKDVCYCFYPEGEDKTEVCSC) is knottin domain. 4 cysteine pairs are disulfide-bonded: Cys48/Cys63, Cys55/Cys72, Cys62/Cys88, and Cys74/Cys86. A linear cationic cytotoxin domain region spans residues 89–108 (QQPKSHKYIEKVVDKAKTVV).

The protein belongs to the neurotoxin 19 (CSTX) family. 05 (U4-Lctx) subfamily. In terms of tissue distribution, expressed by the venom gland.

Its subcellular location is the secreted. Enhances the high-affinity desensitization of human P2RX3 purinoceptors. The sequence is that of U4-lycotoxin-Ls1a from Lycosa singoriensis (Wolf spider).